Here is a 403-residue protein sequence, read N- to C-terminus: Na(+)/H(+) antiporter NhaH (403 aa).

Topologically, residues 1–6 are cytoplasmic; it reads MHGFHD. A helical transmembrane segment spans residues 7 to 27; that stretch reads VFIQILLLLAISVSVIAIAKL. The Extracellular segment spans residues 28-30; sequence LKE. Residues 31 to 51 traverse the membrane as a helical segment; it reads PDSIALVLVGLVLGLTELPII. The Cytoplasmic portion of the chain corresponds to 52 to 65; the sequence is EDAERYITQSEVFQ. The chain crosses the membrane as a helical span at residues 66 to 86; that stretch reads ATIISLFLPILLGDATLKLPF. Over 87–98 the chain is Extracellular; it reads HHLFSQKKTVLG. The helical transmembrane segment at 99–119 threads the bilayer; it reads LAFVGTFVSSICIGTAAYFLL. Over 120–124 the chain is Cytoplasmic; it reads DLPLA. The helical transmembrane segment at 125–145 threads the bilayer; the sequence is VAFTFAALMSATDPISVLSIF. Topologically, residues 146-167 are extracellular; sequence KSLGVPQKMSTVMEGESLFNDG. A helical membrane pass occupies residues 168–188; the sequence is IAVVLFKIASIYLLTYMEMGW. Residues 189-195 lie on the Cytoplasmic side of the membrane; the sequence is AGLGSGV. A helical membrane pass occupies residues 196-216; sequence FLFLKFAIGGALVGLVLGYFF. The Extracellular portion of the chain corresponds to 217 to 218; the sequence is SQ. The helical transmembrane segment at 219–239 threads the bilayer; that stretch reads VIRVFDDYPLEVAFSALLFFG. Residues 240–241 lie on the Cytoplasmic side of the membrane; the sequence is SY. A helical membrane pass occupies residues 242–262; the sequence is FIAEHFHTSGVIAVVVGGFVF. At 263-281 the chain is on the extracellular side; sequence GDYGAKIGMSKETKTNINT. A helical membrane pass occupies residues 282–302; the sequence is FWDSVTLIANALIFLMVGLEI. Residues 303 to 310 are Cytoplasmic-facing; sequence RNIDLAGN. The helical transmembrane segment at 311–331 threads the bilayer; the sequence is WGVIVGAILIVLVGRTIAVYL. Over 332–372 the chain is Extracellular; that stretch reads GTGWVQELSSKERLLINWGGLRGSLSVALALSLPMDFAGRD. The helical transmembrane segment at 373–393 threads the bilayer; that stretch reads QVLLLTFSVVLFSLIVQGLTL. Residues 394-403 lie on the Cytoplasmic side of the membrane; that stretch reads KPLIKKLGMI.

It belongs to the monovalent cation:proton antiporter 1 (CPA1) transporter (TC 2.A.36) family.

The protein localises to the cell membrane. Na(+)/H(+) antiporter that extrudes sodium in exchange for external protons. Can also transport lithium. This Halobacillus dabanensis protein is Na(+)/H(+) antiporter NhaH (nhaH).